Reading from the N-terminus, the 419-residue chain is DNA-directed RNA polymerase I subunit RPA49 (419 aa).

Residues serine 35 and serine 163 each carry the phosphoserine modification. Residue lysine 373 is modified to N6-acetyllysine. A disordered region spans residues 397–419 (GTLSLPLPPAQTSDRLAKRRKIT).

The protein belongs to the eukaryotic RPA49/POLR1E RNA polymerase subunit family. Component of the RNA polymerase I (Pol I) complex consisting of 13 subunits: a ten-subunit catalytic core composed of POLR1A/RPA1, POLR1B/RPA2, POLR1C/RPAC1, POLR1D/RPAC2, POLR1H/RPA12, POLR2E/RPABC1, POLR2F/RPABC2, POLR2H/RPABC3, POLR2K/RPABC4 and POLR2L/RPABC5; a mobile stalk subunit POLR1F/RPA43 protruding from the core and additional subunits homologous to general transcription factors POLR1E/RPA49 and POLR1G/RPA34. Forms a heterodimer with POLR1G/RPA34. Interacts with POLR1G. Also binds UBTF/UBF. Interacts with PWP1. Post-translationally, acetylated at Lys-373 by CREBBP/CBP, leading to decreased RNA polymerase I transcription. In normal conditions, deacetylated by SIRT7, promoting the association of RNA polymerase I with the rDNA promoter region and coding region. In response to stress, SIRT7 is released from nucleoli leading to hyperacetylation of POLR1E/PAF53 and decreased association of RNA polymerase I with the rDNA promoter region.

Its subcellular location is the nucleus. The protein resides in the nucleolus. Functionally, component of RNA polymerase I (Pol I), a DNA-dependent RNA polymerase which synthesizes ribosomal RNA precursors using the four ribonucleoside triphosphates as substrates. Appears to be involved in the formation of the initiation complex at the promoter by mediating the interaction between Pol I and UBTF/UBF. The polypeptide is DNA-directed RNA polymerase I subunit RPA49 (POLR1E) (Homo sapiens (Human)).